A 177-amino-acid chain; its full sequence is Parathyroid hormone-related protein (177 aa).

Residues methionine 1–glycine 24 form the signal peptide. Residues arginine 25–leucine 34 constitute a propeptide that is removed on maturation. The important for receptor binding stretch occupies residues arginine 57 to histidine 68. Residues alanine 74–threonine 149 form a disordered region. Residues serine 76 to asparagine 90 show a composition bias toward polar residues. The short motif at threonine 108–lysine 129 is the Nuclear localization signal element. A compositionally biased stretch (basic and acidic residues) spans asparagine 109–proline 118. The span at proline 122–lysine 132 shows a compositional bias: basic residues.

This sequence belongs to the parathyroid hormone family. As to quaternary structure, PTHrP interacts with PTH1R (via N-terminal extracellular domain). There are several secretory forms, including osteostatin, arising from endoproteolytic cleavage of the initial translation product. Each of these secretory forms is believed to have one or more of its own receptors that mediates the normal paracrine, autocrine and endocrine actions.

Its subcellular location is the secreted. It localises to the cytoplasm. It is found in the nucleus. Functionally, neuroendocrine peptide which is a critical regulator of cellular and organ growth, development, migration, differentiation and survival and of epithelial calcium ion transport. Acts by binding to its receptor, PTH1R, activating G protein-coupled receptor signaling. Regulates endochondral bone development and epithelial-mesenchymal interactions during the formation of the mammary glands and teeth. Required for skeletal homeostasis. Promotes mammary mesenchyme differentiation and bud outgrowth by modulating mesenchymal cell responsiveness to BMPs. Up-regulates BMPR1A expression in the mammary mesenchyme and this increases the sensitivity of these cells to BMPs and allows them to respond to BMP4 in a paracrine and/or autocrine fashion. BMP4 signaling in the mesenchyme, in turn, triggers epithelial outgrowth and augments MSX2 expression, which causes the mammary mesenchyme to inhibit hair follicle formation within the nipple sheath. Its function is as follows. Potent inhibitor of osteoclastic bone resorption. This Bos taurus (Bovine) protein is Parathyroid hormone-related protein (PTHLH).